Here is a 242-residue protein sequence, read N- to C-terminus: Type III pantothenate kinase (242 aa).

Residue 7-14 coordinates ATP; it reads DLGNSRFK. Substrate is bound by residues Tyr91 and 98 to 101; that span reads GVDR. The active-site Proton acceptor is the Asp100. An ATP-binding site is contributed by Thr121. Residue Thr171 participates in substrate binding.

The protein belongs to the type III pantothenate kinase family. In terms of assembly, homodimer. It depends on NH4(+) as a cofactor. K(+) is required as a cofactor.

Its subcellular location is the cytoplasm. The enzyme catalyses (R)-pantothenate + ATP = (R)-4'-phosphopantothenate + ADP + H(+). The protein operates within cofactor biosynthesis; coenzyme A biosynthesis; CoA from (R)-pantothenate: step 1/5. Catalyzes the phosphorylation of pantothenate (Pan), the first step in CoA biosynthesis. The protein is Type III pantothenate kinase of Xanthomonas oryzae pv. oryzae (strain MAFF 311018).